A 469-amino-acid chain; its full sequence is Probable ribonuclease FAU-1 (469 aa).

It belongs to the FAU-1 family.

Its function is as follows. Probable RNase involved in rRNA stability through maturation and/or degradation of precursor rRNAs. Binds to RNA in loop regions with AU-rich sequences. In Pyrococcus horikoshii (strain ATCC 700860 / DSM 12428 / JCM 9974 / NBRC 100139 / OT-3), this protein is Probable ribonuclease FAU-1.